Here is a 467-residue protein sequence, read N- to C-terminus: ATP-dependent protease ATPase subunit HslU (467 aa).

ATP is bound by residues V22 and 64–69 (GVGKTE). The tract at residues 146-185 (KASNNSNPLESLLGGAIPNFGNNDDEEEETPTEEIKTKRS) is disordered. Acidic residues predominate over residues 168–177 (NDDEEEETPT). Positions 280, 345, and 417 each coordinate ATP.

This sequence belongs to the ClpX chaperone family. HslU subfamily. In terms of assembly, a double ring-shaped homohexamer of HslV is capped on each side by a ring-shaped HslU homohexamer. The assembly of the HslU/HslV complex is dependent on binding of ATP.

It localises to the cytoplasm. ATPase subunit of a proteasome-like degradation complex; this subunit has chaperone activity. The binding of ATP and its subsequent hydrolysis by HslU are essential for unfolding of protein substrates subsequently hydrolyzed by HslV. HslU recognizes the N-terminal part of its protein substrates and unfolds these before they are guided to HslV for hydrolysis. The sequence is that of ATP-dependent protease ATPase subunit HslU from Staphylococcus haemolyticus (strain JCSC1435).